A 72-amino-acid chain; its full sequence is U1-sicaritoxin-Sdo1a (72 aa).

Residues M1 to A24 form the signal peptide. A propeptide spanning residues E25–M41 is cleaved from the precursor. 3 disulfide bridges follow: C43–C61, C50–C64, and C60–C69.

Expressed by the venom gland.

It is found in the secreted. The polypeptide is U1-sicaritoxin-Sdo1a (Hexophthalma dolichocephala (Afrotropical spider)).